The chain runs to 383 residues: Lipid-A-disaccharide synthase (383 aa).

Belongs to the LpxB family.

The enzyme catalyses a lipid X + a UDP-2-N,3-O-bis[(3R)-3-hydroxyacyl]-alpha-D-glucosamine = a lipid A disaccharide + UDP + H(+). The protein operates within bacterial outer membrane biogenesis; LPS lipid A biosynthesis. Condensation of UDP-2,3-diacylglucosamine and 2,3-diacylglucosamine-1-phosphate to form lipid A disaccharide, a precursor of lipid A, a phosphorylated glycolipid that anchors the lipopolysaccharide to the outer membrane of the cell. In Trichlorobacter lovleyi (strain ATCC BAA-1151 / DSM 17278 / SZ) (Geobacter lovleyi), this protein is Lipid-A-disaccharide synthase.